A 247-amino-acid polypeptide reads, in one-letter code: tRNA uridine(34) hydroxylase (247 aa).

The Rhodanese domain maps to 124–218; that stretch reads TKQDVIVIDT…YLEDTQNKNN (95 aa). Cysteine 178 serves as the catalytic Cysteine persulfide intermediate.

Belongs to the TrhO family.

The enzyme catalyses uridine(34) in tRNA + AH2 + O2 = 5-hydroxyuridine(34) in tRNA + A + H2O. Its function is as follows. Catalyzes oxygen-dependent 5-hydroxyuridine (ho5U) modification at position 34 in tRNAs. This is tRNA uridine(34) hydroxylase from Rickettsia africae (strain ESF-5).